Here is a 333-residue protein sequence, read N- to C-terminus: MTTTLLRTADELHARVRHGRRAVVMTMGALHEGHATLIRTAREIAGAEGEVVVTVFVNPLQFGRGEDLDRYPRTLDADLKIAEAAGADVVFAPSADEVYPGGEPQVRISAGPMGERLEGAFRPGHFDGMLTVVGKLLHLTRPDVALYGQKDAQQLALIRRMARDLNFGVEIVGVPTVREDDGLALSSRNRYLAADERRTALALSQALFAGRDRHAAQEALRARAREVPATRARAEALSAIGESRAAADAHAVAKATPAGTSGPAAVRCAARLVLEEAARLQPPLVLDYLGLVDPSDFTEIPDDFTGEAVLAVAARVGTTRLIDNIPLTFGAAS.

27 to 34 (MGALHEGH) contacts ATP. His-34 acts as the Proton donor in catalysis. Position 61 (Gln-61) interacts with (R)-pantoate. Gln-61 lines the beta-alanine pocket. An ATP-binding site is contributed by 148 to 151 (GQKD). Gln-154 contacts (R)-pantoate. ATP contacts are provided by residues Val-177 and 185 to 188 (LSSR).

The protein belongs to the pantothenate synthetase family. As to quaternary structure, homodimer.

The protein localises to the cytoplasm. It carries out the reaction (R)-pantoate + beta-alanine + ATP = (R)-pantothenate + AMP + diphosphate + H(+). The protein operates within cofactor biosynthesis; (R)-pantothenate biosynthesis; (R)-pantothenate from (R)-pantoate and beta-alanine: step 1/1. Functionally, catalyzes the condensation of pantoate with beta-alanine in an ATP-dependent reaction via a pantoyl-adenylate intermediate. This is Pantothenate synthetase from Streptomyces avermitilis (strain ATCC 31267 / DSM 46492 / JCM 5070 / NBRC 14893 / NCIMB 12804 / NRRL 8165 / MA-4680).